The primary structure comprises 1085 residues: Kinesin-like protein cut7 (1085 aa).

The tract at residues 1 to 70 is disordered; it reads MAPRVAPGGS…TDHALHDENE (70 aa). The span at 24–37 shows a compositional bias: polar residues; that stretch reads PVSTPNSHFRSASN. The Kinesin motor domain maps to 72-421; that stretch reads NINVVVRVRG…LEYAARAKSI (350 aa). ATP is bound at residue 159 to 166; it reads GQTGTGKT. 3 coiled-coil regions span residues 436–604, 715–740, and 897–955; these read LIKD…WNLK, ISSE…LRSL, and LALA…DSIK. Repeats lie at residues 987–998 and 999–1010; these read DESLCNLETTIE and DTSLVKLETTGD. T1011 bears the Phosphothreonine; by CDC2 mark. A disordered region spans residues 1049-1085; it reads YTSSNQTNEPDVYDKPSNSSRTSLLRSSRSAYSKMKR. Over residues 1065-1078 the composition is skewed to low complexity; the sequence is SNSSRTSLLRSSRS.

Belongs to the TRAFAC class myosin-kinesin ATPase superfamily. Kinesin family. BimC subfamily.

The protein localises to the cytoplasm. It localises to the cytoskeleton. The protein resides in the microtubule organizing center. Its subcellular location is the spindle pole body. Could be a spindle pole body motor. On transition from G2 to M phase of the cell cycle, the spindle pole body duplicates; the daughter pole bodies seed microtubules which interdigitate to form a short spindle that elongates to span the nucleus at metaphase. Mutations at cut7 block spindle formation. This Schizosaccharomyces pombe (strain 972 / ATCC 24843) (Fission yeast) protein is Kinesin-like protein cut7 (cut7).